The sequence spans 383 residues: tRNA(Met) cytidine acetate ligase (383 aa).

ATP-binding positions include 7–20 (IAEF…HEFL), glycine 101, asparagine 153, and 178–179 (RI).

It belongs to the TmcAL family.

It localises to the cytoplasm. The enzyme catalyses cytidine(34) in elongator tRNA(Met) + acetate + ATP = N(4)-acetylcytidine(34) in elongator tRNA(Met) + AMP + diphosphate. Functionally, catalyzes the formation of N(4)-acetylcytidine (ac(4)C) at the wobble position of elongator tRNA(Met), using acetate and ATP as substrates. First activates an acetate ion to form acetyladenylate (Ac-AMP) and then transfers the acetyl group to tRNA to form ac(4)C34. This is tRNA(Met) cytidine acetate ligase from Lactobacillus helveticus (strain DPC 4571).